The chain runs to 511 residues: Sodium/proline symporter (511 aa).

13 helical membrane passes run 16 to 36 (WQTY…AFTY), 53 to 73 (IGPY…WMIM), 84 to 104 (LSAM…YFVV), 138 to 158 (IISG…GFVS), 173 to 193 (FGLI…GYLA), 199 to 219 (FFQG…AMMN), 239 to 259 (LFKG…LGYF), 285 to 305 (ISWM…GIAF), 326 to 346 (VLFH…AIMS), 380 to 400 (FVMI…AIAW), 409 to 429 (LVGN…LFAL), 437 to 457 (AGAV…IAWI), and 466 to 486 (IFGL…TYVV).

It belongs to the sodium:solute symporter (SSF) (TC 2.A.21) family.

It localises to the cell membrane. The catalysed reaction is L-proline(in) + Na(+)(in) = L-proline(out) + Na(+)(out). In terms of biological role, catalyzes the sodium-dependent uptake of extracellular L-proline. Since most S.aureus strains are L-proline auxotrophs, this transporter may aid the bacterial persistence during an infection of tissues with low proline concentrations. The protein is Sodium/proline symporter of Staphylococcus aureus.